A 313-amino-acid chain; its full sequence is Foldase protein PrsA (313 aa).

Residues 1 to 20 (MKKKLLAGAITLLSVATLAA) form the signal peptide. Cys21 carries the N-palmitoyl cysteine lipid modification. Cys21 carries S-diacylglycerol cysteine lipidation. In terms of domain architecture, PpiC spans 143–241 (TPDVTAQIIR…SQYYIVKLTK (99 aa)).

It belongs to the PrsA family.

It is found in the cell membrane. It carries out the reaction [protein]-peptidylproline (omega=180) = [protein]-peptidylproline (omega=0). Its function is as follows. Plays a major role in protein secretion by helping the post-translocational extracellular folding of several secreted proteins. The chain is Foldase protein PrsA from Streptococcus pneumoniae serotype 4 (strain ATCC BAA-334 / TIGR4).